We begin with the raw amino-acid sequence, 177 residues long: Interleukin-1 receptor antagonist protein (177 aa).

The N-terminal stretch at 1–25 (MRPSRSTRRHLISLLLFLFHSETAC) is a signal peptide. A disulfide bridge connects residues C91 and C141. N109 is a glycosylation site (N-linked (GlcNAc...) asparagine).

Belongs to the IL-1 family.

It localises to the secreted. Functionally, anti-inflammatory antagonist of interleukin-1 family of proinflammatory cytokines such as interleukin-1beta/IL1B and interleukin-1alpha/IL1A. Protects from immune dysregulation and uncontrolled systemic inflammation triggered by IL1 for a range of innate stimulatory agents such as pathogens. The sequence is that of Interleukin-1 receptor antagonist protein (IL1RN) from Oryctolagus cuniculus (Rabbit).